A 1276-amino-acid chain; its full sequence is Sterol regulatory element-binding protein cleavage-activating protein (1276 aa).

Topologically, residues 1 to 18 are cytoplasmic; that stretch reads MTLTERLREKISQAFYNH. Residues 19–39 traverse the membrane as a helical segment; sequence GLLCASYPIPIILFTGLCILA. The Lumenal portion of the chain corresponds to 40–279; it reads CCYPLLKLPL…NLVHVHFKEE (240 aa). Residues 46–284 form a loop-1 region; sequence KLPLPGTGPV…HFKEEIGIAE (239 aa). The segment at 60 to 81 is disordered; the sequence is PVKDYSPPPVDSDHKQGEPSEQ. Asparagine 263 is a glycosylation site (N-linked (GlcNAc...) asparagine). A helical membrane pass occupies residues 280 to 300; that stretch reads IGIAELIPLVTTYIILFAYIY. Residues 284-442 form the SSD domain; sequence ELIPLVTTYI…MFFFTTVLSI (159 aa). The Cytoplasmic segment spans residues 301-312; it reads FSTRKIDMVKSK. A helical transmembrane segment spans residues 313 to 333; sequence WGLALAAVVTVLSSLLMSVGL. Topologically, residues 334–344 are lumenal; that stretch reads CTLFGLTPTLN. Residues 345 to 365 form a helical membrane-spanning segment; that stretch reads GGEIFPYLVVVIGLENVLVLT. The Cytoplasmic segment spans residues 366-401; that stretch reads KSVVSTPVDLEVKLRIAQGLSSESWSIMKNVATELG. Residues 402-422 form a helical membrane-spanning segment; that stretch reads IILIGYFTLVPAIQEFCLFAV. Residue valine 423 is a topological domain, lumenal. Residues 424–444 traverse the membrane as a helical segment; the sequence is GLVSDFFLQMFFFTTVLSIDI. Over 445 to 518 the chain is Cytoplasmic; that stretch reads RRMELADLNK…FLARTRLAQR (74 aa). Positions 447–452 match the ER export signal motif; it reads MELADL. Residues lysine 454 and lysine 466 each participate in a glycyl lysine isopeptide (Lys-Gly) (interchain with G-Cter in ubiquitin) cross-link. Residues 519–539 form a helical membrane-spanning segment; that stretch reads LIMAGTVVWIGILVYTDPAGL. A loop-7 region spans residues 535–710; it reads DPAGLRTYLA…QAHGDITLYK (176 aa). Residues 540–708 lie on the Lumenal side of the membrane; the sequence is RTYLAAQVTE…GTQAHGDITL (169 aa). Residues asparagine 590 and asparagine 641 are each glycosylated (N-linked (GlcNAc...) asparagine). A helical transmembrane segment spans residues 709-729; that stretch reads YKVAALGLAAGIVLVLLLLCL. The Cytoplasmic segment spans residues 730-1276; that stretch reads YRVLCPRNYG…YVPSVLEKLD (547 aa). The interaction with SREBF2 stretch occupies residues 731-1276; it reads RVLCPRNYGQ…YVPSVLEKLD (546 aa). The WD 1 repeat unit spans residues 771 to 811; sequence VLRGHLMDIECLASDGMLLVSCCLAGQVCVWDAQTGDCLTR. Residues 816-903 form a disordered region; it reads GSRRDSCGGG…RHRAGCGRAR (88 aa). 6 positions are modified to phosphoserine: serine 821, serine 837, serine 843, serine 850, serine 905, and serine 934. The segment at 928-957 is disordered; that stretch reads PALRPPSPGSPLPQASQEDGAAPEKGSPPL. 2 WD repeats span residues 949 to 999 and 1002 to 1039; these read APEK…LCCS and EVSS…SLSP. At arginine 1048 the chain carries Omega-N-methylarginine. 4 WD repeats span residues 1074–1111, 1114–1152, 1155–1192, and 1194–1232; these read AHQK…CLFT, GHSG…RVSH, AHRG…KLYS, and QQDL…LLQT.

The protein belongs to the WD repeat SCAP family. Membrane region forms a homotetramer. Component of the SCAP-SREBP complex (composed of SCAP and SREBF1/SREBP1 or SREBF2/SREBP2); interacts with SREBF1/SREBP1 or SREBF2/SREBP2 through its C-terminal cytoplasmic domain. Forms a ternary complex with INSIG1 or INSIG2 through its transmembrane domains at high sterol concentrations. Interacts with PAQR3; the interaction anchors the SCAP-SREBP complex to the Golgi apparatus in low cholesterol conditions. Interacts with the SEC23-SEC24 complex in a SAR1-GTP-dependent manner through an ER export signal in its third cytoplasmic loop. Interacts with RNF139; the interaction inhibits the interaction of SCAP with SEC24B and hampering the ER to Golgi transport of the SCAP-SREBP complex. Interacts with SPRING. Post-translationally, ubiquitinated at Lys-454 and Lys-466. RNF145 triggers ubiquitination of SCAP, likely inhibiting SCAP-SREBP complex transport to the Golgi apparatus and the subsequent processing/maturation of SREBF2/SREBP2.

It is found in the endoplasmic reticulum membrane. It localises to the golgi apparatus membrane. The protein resides in the cytoplasmic vesicle. The protein localises to the COPII-coated vesicle membrane. Functionally, escort protein required for cholesterol as well as lipid homeostasis. Regulates export of the SCAP-SREBP complex from the endoplasmic reticulum to the Golgi upon low cholesterol, thereby regulating the processing of sterol regulatory element-binding proteins (SREBPs) SREBF1/SREBP1 and SREBF2/SREBP2. At high sterol concentrations, formation of a ternary complex with INSIG (INSIG1 or INSIG2) leads to mask the ER export signal in SCAP, promoting retention of the complex in the endoplasmic reticulum. Low sterol concentrations trigger release of INSIG, a conformational change in the SSD domain of SCAP, unmasking of the ER export signal, promoting recruitment into COPII-coated vesicles and transport of the SCAP-SREBP to the Golgi: in the Golgi, SREBPs are then processed, releasing the transcription factor fragment of SREBPs from the membrane, its import into the nucleus and up-regulation of LDLR, INSIG1 and the mevalonate pathway. Binds cholesterol via its SSD domain. In Cricetulus griseus (Chinese hamster), this protein is Sterol regulatory element-binding protein cleavage-activating protein.